A 249-amino-acid chain; its full sequence is NADH-quinone oxidoreductase subunit C (249 aa).

Positions 1–29 (MTENQTTPDPGEPGSSADRPGGLVPTGDS) are disordered.

It belongs to the complex I 30 kDa subunit family. In terms of assembly, NDH-1 is composed of 14 different subunits. Subunits NuoB, C, D, E, F, and G constitute the peripheral sector of the complex.

It is found in the cell membrane. It catalyses the reaction a quinone + NADH + 5 H(+)(in) = a quinol + NAD(+) + 4 H(+)(out). Functionally, NDH-1 shuttles electrons from NADH, via FMN and iron-sulfur (Fe-S) centers, to quinones in the respiratory chain. The immediate electron acceptor for the enzyme in this species is believed to be a menaquinone. Couples the redox reaction to proton translocation (for every two electrons transferred, four hydrogen ions are translocated across the cytoplasmic membrane), and thus conserves the redox energy in a proton gradient. This chain is NADH-quinone oxidoreductase subunit C, found in Saccharopolyspora erythraea (strain ATCC 11635 / DSM 40517 / JCM 4748 / NBRC 13426 / NCIMB 8594 / NRRL 2338).